Here is a 480-residue protein sequence, read N- to C-terminus: Ciliated left-right organizer protein containing ZP-N domains homolog (480 aa).

A signal peptide spans 1-23 (MKNQHNTFWVLCLLFVMFDETFS).

As to expression, expressed specifically by cells of the ciliated left-right organizer.

The protein resides in the secreted. In Xenopus tropicalis (Western clawed frog), this protein is Ciliated left-right organizer protein containing ZP-N domains homolog.